A 528-amino-acid polypeptide reads, in one-letter code: Peptide chain release factor 3 (528 aa).

Positions 10–278 constitute a tr-type G domain; it reads DRRRTFGIIS…AFVEQAPVPR (269 aa). Residues 19-26, 87-91, and 141-144 contribute to the GTP site; these read SHPDAGKT, DTPGH, and NKLD.

Belongs to the TRAFAC class translation factor GTPase superfamily. Classic translation factor GTPase family. PrfC subfamily.

The protein localises to the cytoplasm. Its function is as follows. Increases the formation of ribosomal termination complexes and stimulates activities of RF-1 and RF-2. It binds guanine nucleotides and has strong preference for UGA stop codons. It may interact directly with the ribosome. The stimulation of RF-1 and RF-2 is significantly reduced by GTP and GDP, but not by GMP. The chain is Peptide chain release factor 3 from Syntrophotalea carbinolica (strain DSM 2380 / NBRC 103641 / GraBd1) (Pelobacter carbinolicus).